A 138-amino-acid chain; its full sequence is Basic phospholipase A2 homolog ammodytin L (138 aa).

The signal sequence occupies residues Met1–Gly16. 7 cysteine pairs are disulfide-bonded: Cys42/Cys131, Cys44/Cys60, Cys59/Cys111, Cys65/Cys138, Cys66/Cys104, Cys73/Cys97, and Cys91/Cys102. Positions Lys121–Gly133 are important for membrane-damaging activities in eukaryotes and bacteria; heparin-binding.

This sequence belongs to the phospholipase A2 family. Group II subfamily. S49 sub-subfamily. As to expression, expressed by the venom gland.

The protein resides in the secreted. Snake venom phospholipase A2 homolog that lacks enzymatic activity. Is very active in inducing myonecrosis in vivo and shows a potent calcium-independent membrane-damaging activity in vitro, most probably by binding and incorporating in the membrane. Also acts as a presynaptic neurotoxin. A model of myotoxic mechanism has been proposed: an apo Lys49-PLA2 is activated by the entrance of a hydrophobic molecule (e.g. fatty acid) at the hydrophobic channel of the protein leading to a reorientation of a monomer. This reorientation causes a transition between 'inactive' to 'active' states, causing alignment of C-terminal and membrane-docking sites (MDoS) side-by-side and putting the membrane-disruption sites (MDiS) in the same plane, exposed to solvent and in a symmetric position for both monomers. The MDoS region stabilizes the toxin on membrane by the interaction of charged residues with phospholipid head groups. Subsequently, the MDiS region destabilizes the membrane with penetration of hydrophobic residues. This insertion causes a disorganization of the membrane, allowing an uncontrolled influx of ions (i.e. calcium and sodium), and eventually triggering irreversible intracellular alterations and cell death. The protein is Basic phospholipase A2 homolog ammodytin L of Vipera ammodytes ammodytes (Western sand viper).